Reading from the N-terminus, the 365-residue chain is Caffeic acid 3-O-methyltransferase (365 aa).

Residue Asn133 participates in (E)-ferulate binding. Residues Gly210, Asp233, Asp253, Met254, Met266, and Lys267 each contribute to the S-adenosyl-L-homocysteine site. His271 functions as the Proton acceptor in the catalytic mechanism. Asp272 is a binding site for (E)-5-hydroxyferulate.

Belongs to the class I-like SAM-binding methyltransferase superfamily. Cation-independent O-methyltransferase family. COMT subfamily. As to quaternary structure, homodimer.

The enzyme catalyses (E)-caffeate + S-adenosyl-L-methionine = (E)-ferulate + S-adenosyl-L-homocysteine + H(+). It catalyses the reaction (E)-5-hydroxyferulate + S-adenosyl-L-methionine = (E)-sinapate + S-adenosyl-L-homocysteine + H(+). The protein operates within aromatic compound metabolism; phenylpropanoid biosynthesis. Inhibited by Cu(2+), and to a lesser extent by Ni(2+), Mn(2+), Co(2+), Fe(3+) and Zn(2+). Unaffected by Fe(2+) and Mg(2+). In terms of biological role, catalyzes the conversion of caffeic acid to ferulic acid and of 5-hydroxyferulic acid to sinapic acid. The resulting products may subsequently be converted to the corresponding alcohols that are incorporated into lignins. This chain is Caffeic acid 3-O-methyltransferase, found in Ammi majus (Bishop's weed).